A 261-amino-acid chain; its full sequence is Phosphoribosylaminoimidazole-succinocarboxamide synthase (261 aa).

Belongs to the SAICAR synthetase family.

The enzyme catalyses 5-amino-1-(5-phospho-D-ribosyl)imidazole-4-carboxylate + L-aspartate + ATP = (2S)-2-[5-amino-1-(5-phospho-beta-D-ribosyl)imidazole-4-carboxamido]succinate + ADP + phosphate + 2 H(+). It participates in purine metabolism; IMP biosynthesis via de novo pathway; 5-amino-1-(5-phospho-D-ribosyl)imidazole-4-carboxamide from 5-amino-1-(5-phospho-D-ribosyl)imidazole-4-carboxylate: step 1/2. This Novosphingobium aromaticivorans (strain ATCC 700278 / DSM 12444 / CCUG 56034 / CIP 105152 / NBRC 16084 / F199) protein is Phosphoribosylaminoimidazole-succinocarboxamide synthase.